Reading from the N-terminus, the 204-residue chain is Molybdenum cofactor guanylyltransferase (204 aa).

GTP contacts are provided by residues Leu-12–Gly-14, Lys-25, Asn-53, Asp-71, and Asp-101. Asp-101 contacts Mg(2+).

Belongs to the MobA family. As to quaternary structure, monomer. It depends on Mg(2+) as a cofactor.

It is found in the cytoplasm. It catalyses the reaction Mo-molybdopterin + GTP + H(+) = Mo-molybdopterin guanine dinucleotide + diphosphate. Functionally, transfers a GMP moiety from GTP to Mo-molybdopterin (Mo-MPT) cofactor (Moco or molybdenum cofactor) to form Mo-molybdopterin guanine dinucleotide (Mo-MGD) cofactor. In Ralstonia nicotianae (strain ATCC BAA-1114 / GMI1000) (Ralstonia solanacearum), this protein is Molybdenum cofactor guanylyltransferase.